The primary structure comprises 489 residues: Adenylosuccinate synthetase 2, chloroplastic (489 aa).

The transit peptide at 1-54 (MPLASLSLDPAPFPLIRPAAGWSGRVLPVPGPAPRLCRPLRAAPVAPATTDEPS) directs the protein to the chloroplast. GTP-binding positions include 76–82 (GDEGKGK) and 104–106 (GHT). Aspartate 77 acts as the Proton acceptor in catalysis. 2 residues coordinate Mg(2+): aspartate 77 and glycine 104. Residues 77–80 (DEGK), 102–105 (NAGH), threonine 194, arginine 208, glutamine 288, threonine 303, and arginine 367 each bind IMP. Histidine 105 serves as the catalytic Proton donor. Substrate is bound at residue 363–369 (TTTGRPR). GTP contacts are provided by residues arginine 369, 395 to 397 (KLD), and 478 to 480 (GVG).

Belongs to the adenylosuccinate synthetase family. In terms of assembly, homodimer. Mg(2+) serves as cofactor.

It is found in the plastid. The protein localises to the chloroplast. It carries out the reaction IMP + L-aspartate + GTP = N(6)-(1,2-dicarboxyethyl)-AMP + GDP + phosphate + 2 H(+). It participates in purine metabolism; AMP biosynthesis via de novo pathway; AMP from IMP: step 1/2. In terms of biological role, plays an important role in the de novo pathway and in the salvage pathway of purine nucleotide biosynthesis. Catalyzes the first committed step in the biosynthesis of AMP from IMP. This is Adenylosuccinate synthetase 2, chloroplastic from Sorghum bicolor (Sorghum).